A 974-amino-acid chain; its full sequence is Probable proton ATPase 1A (974 aa).

The span at 1 to 23 shows a compositional bias: basic and acidic residues; it reads MSSKKYELDAAAFEDKPESHSDA. The tract at residues 1-61 is disordered; that stretch reads MSSKKYELDA…ATDLLPPSKG (61 aa). Over 1–92 the chain is Cytoplasmic; it reads MSSKKYELDA…KTPSWLIYVR (92 aa). A helical membrane pass occupies residues 93–112; sequence GLWGPMPAALWIAIIIEFAL. The Extracellular segment spans residues 113–117; it reads ENWPD. Residues 118–137 traverse the membrane as a helical segment; sequence GAILFAIQIANATIGWYETI. Residues 138–264 are Cytoplasmic-facing; sequence KAGDAVAALK…LGNIHVILRR (127 aa). Residues 265–286 traverse the membrane as a helical segment; it reads VMFSLCAISFMLCMCCFIYLLA. Over 287-294 the chain is Extracellular; sequence RFYETFRH. A helical membrane pass occupies residues 295 to 321; sequence ALQFAVVVLVVSIPIALEIVVTTTLAV. Residues 322-630 are Cytoplasmic-facing; the sequence is GSKHLSKHKI…AVHGATDAAR (309 aa). D351 (4-aspartylphosphate intermediate) is an active-site residue. Positions 605 and 609 each coordinate Mg(2+). Residues 631–651 traverse the membrane as a helical segment; sequence AAADMVLTEPGLSVVVEAMLV. Over 652–661 the chain is Extracellular; it reads SREVFQRMLS. The helical transmembrane segment at 662-684 threads the bilayer; sequence FLTYRISATLQLVCFFFIACFSL. The Cytoplasmic segment spans residues 685–697; sequence TPKAYGSVDPHFQ. Residues 698–712 form a helical membrane-spanning segment; sequence FFHLPVLMFMLITLL. Topologically, residues 713-737 are extracellular; it reads NDGCLMTIGYDHVIPSERPQKWNLP. Residue D714 coordinates Mg(2+). The chain crosses the membrane as a helical span at residues 738–761; the sequence is VVFVSASILAAVACGSSLMLLWIG. Over 762-812 the chain is Cytoplasmic; that stretch reads LEGYSSQYYENSWFHRLGLAQLPQGKLVTMMYLKISISDFLTLFSSRTGGH. Residues 813-840 form a helical membrane-spanning segment; the sequence is FFFYMPPSPILFCGAIISLLVSTMAASF. At 841–868 the chain is on the extracellular side; that stretch reads WHKSRPDNVLTEGLAWGQTNAEKLLPLW. The chain crosses the membrane as a helical span at residues 869-887; the sequence is VWIYCIVWWFVQDVVKVLA. Residues 888-974 are Cytoplasmic-facing; sequence HICMDAVDLF…VNVYVSRDQK (87 aa). A compositionally biased stretch (basic and acidic residues) spans 950–959; it reads GLREDTHSPI. Positions 950–974 are disordered; it reads GLREDTHSPIEEASPVNVYVSRDQK.

It belongs to the cation transport ATPase (P-type) (TC 3.A.3) family. Type IIIA subfamily.

It is found in the membrane. The catalysed reaction is ATP + H2O + H(+)(in) = ADP + phosphate + 2 H(+)(out). The protein is Probable proton ATPase 1A (H1A) of Leishmania donovani.